Consider the following 1091-residue polypeptide: Self-sufficient cytochrome P450 monooxygenase CYP505E1 (1091 aa).

Cys-433 serves as a coordination point for heme. In terms of domain architecture, Flavodoxin-like spans 528–669 (ICFFYGSNSG…DLEAWEETSL (142 aa)). FMN contacts are provided by residues 534–538 (SNSGT) and 613–645 (VFGCGHHDWTQTFYRIPTLIDELMHKAGATRLA). One can recognise an FAD-binding FR-type domain in the interval 707–935 (KDLMEARVTT…RPAKEAFHLP (229 aa)).

The protein in the N-terminal section; belongs to the cytochrome P450 family. Requires FAD as cofactor. FMN serves as cofactor. Heme is required as a cofactor.

It carries out the reaction 2 oxidized [cytochrome P450] + NADPH = 2 reduced [cytochrome P450] + NADP(+) + H(+). It catalyses the reaction an organic molecule + reduced [NADPH--hemoprotein reductase] + O2 = an alcohol + oxidized [NADPH--hemoprotein reductase] + H2O + H(+). The catalysed reaction is dodecanoate + reduced [NADPH--hemoprotein reductase] + O2 = 5-hydroxydodecanoate + oxidized [NADPH--hemoprotein reductase] + H2O + H(+). The enzyme catalyses tetradecanoate + reduced [NADPH--hemoprotein reductase] + O2 = 7-hydroxytetradecanoate + oxidized [NADPH--hemoprotein reductase] + H2O + H(+). It carries out the reaction dodecan-1-ol + reduced [NADPH--hemoprotein reductase] + O2 = 1,5-dodecanediol + oxidized [NADPH--hemoprotein reductase] + H2O + H(+). It catalyses the reaction dodecan-1-ol + reduced [NADPH--hemoprotein reductase] + O2 = 1,4-dodecanediol + oxidized [NADPH--hemoprotein reductase] + H2O + H(+). The catalysed reaction is dodecan-1-ol + reduced [NADPH--hemoprotein reductase] + O2 = 1,6-dodecanediol + oxidized [NADPH--hemoprotein reductase] + H2O + H(+). In terms of biological role, self-sufficient cytochrome P450 monooxygenase that catalyzes the regioselective in-chain hydroxylation of alkanes, fatty alcohols, and fatty acids at the omega-7 position. Performs hydroxylation of C10-C16 n-alkanes and C12 and C14 fatty alcohols; and thereby enables the one step biocatalytic synthesis of rare alcohols such as 5-dodecanol and 7-tetradecanol. Converts 1-dodecanol into 1,5-dodecanediol as major product with very little sub-terminally hydroxylated products with the 1,4-dodecanediol and 1,6-dodecanediol more abundant. Converts dodecanoic acid to 5-hydroxydodecanoic acid which can be further converted into delta-dodecalactone by lactonization of the 5-hydroxy acid at low pH. Also gives sub-terminal hydroxylation of dodecanoic acid with 9-hydroxydodecanoic acid being the second most abundant product. In Aspergillus niger (strain ATCC MYA-4892 / CBS 513.88 / FGSC A1513), this protein is Self-sufficient cytochrome P450 monooxygenase CYP505E1.